Here is a 337-residue protein sequence, read N- to C-terminus: MRVLGIETSCDETGIAIYDDEKGLLANQLYSQVKLHADYGGVVPELASRDHVRKTVPLIQAALKESGLTAKDIDAVAYTAGPGLVGALLVGATVGRSLAFAWNVPAIPVHHMEGHLLAPMLEDNPPEFPFVALLVSGGHTQLISVTGIGQYELLGESIDDAAGEAFDKTAKLLGLDYPGGPLLSKMAAQGTAGRFVFPRPMTDRPGLDFSFSGLKTFAANTIRDNGTDDQTRADIARAFEDAVVDTLMIKCKRALDQTGFKRLVMAGGVSANRTLRAKLAEMMKKRRGEVFYARPEFCTDNGAMIAYAGMVRFKAGATADLGVSVRPRWPLAELPAA.

Residues His111 and His115 each contribute to the Fe cation site. Substrate contacts are provided by residues 134–138 (LVSGG), Asp167, Gly180, and Asn272. Asp300 serves as a coordination point for Fe cation.

This sequence belongs to the KAE1 / TsaD family. Requires Fe(2+) as cofactor.

It localises to the cytoplasm. The catalysed reaction is L-threonylcarbamoyladenylate + adenosine(37) in tRNA = N(6)-L-threonylcarbamoyladenosine(37) in tRNA + AMP + H(+). Functionally, required for the formation of a threonylcarbamoyl group on adenosine at position 37 (t(6)A37) in tRNAs that read codons beginning with adenine. Is involved in the transfer of the threonylcarbamoyl moiety of threonylcarbamoyl-AMP (TC-AMP) to the N6 group of A37, together with TsaE and TsaB. TsaD likely plays a direct catalytic role in this reaction. This is tRNA N6-adenosine threonylcarbamoyltransferase from Escherichia coli O139:H28 (strain E24377A / ETEC).